Reading from the N-terminus, the 421-residue chain is Plant UBX domain-containing protein 5 (421 aa).

One can recognise a UBA domain in the interval 4–45 (ETNENLINSFIEITSSSREEANFFLESHTWNLDAAVSTFLDN). 2 disordered regions span residues 46-171 (DAAA…MMVQ) and 292-338 (ENFT…PSRG). Over residues 69 to 84 (QSPSQSHSPDYTPSET) the composition is skewed to polar residues. The segment covering 85–102 (SPSPSRSRSASPSSRAAP) has biased composition (low complexity). The SEP domain maps to 231–295 (RIMHTITFWL…DLVRRGENFT (65 aa)). Low complexity predominate over residues 312-328 (GASGSGSSSAPQASSAP). Residues 343-420 (PAAPTTSIQL…GIANAVVIQK (78 aa)) enclose the UBX domain.

In terms of assembly, interacts with CDC48A (non-hexameric) via its UBX domain.

The chain is Plant UBX domain-containing protein 5 from Arabidopsis thaliana (Mouse-ear cress).